We begin with the raw amino-acid sequence, 438 residues long: Histidine--tRNA ligase (438 aa).

The protein belongs to the class-II aminoacyl-tRNA synthetase family. In terms of assembly, homodimer.

It localises to the cytoplasm. It catalyses the reaction tRNA(His) + L-histidine + ATP = L-histidyl-tRNA(His) + AMP + diphosphate + H(+). In Thermobifida fusca (strain YX), this protein is Histidine--tRNA ligase (hisS).